The chain runs to 292 residues: Acetylglutamate kinase (292 aa).

Residues 64–65 (GG), Arg86, and Asn190 contribute to the substrate site.

The protein belongs to the acetylglutamate kinase family. ArgB subfamily.

The protein localises to the cytoplasm. It carries out the reaction N-acetyl-L-glutamate + ATP = N-acetyl-L-glutamyl 5-phosphate + ADP. It functions in the pathway amino-acid biosynthesis; L-arginine biosynthesis; N(2)-acetyl-L-ornithine from L-glutamate: step 2/4. Catalyzes the ATP-dependent phosphorylation of N-acetyl-L-glutamate. The protein is Acetylglutamate kinase of Geobacter metallireducens (strain ATCC 53774 / DSM 7210 / GS-15).